A 207-amino-acid chain; its full sequence is UPF0328 protein ECU02_1590/ECU04_0060/ECU08_2120 (207 aa).

Disordered regions lie at residues 1–154 (MPRP…HSHT) and 180–207 (GRLH…LATL). Basic and acidic residues-rich tracts occupy residues 14-24 (DHPDFRSESSA) and 75-97 (HTEG…ETES). Polar residues-rich tracts occupy residues 98-121 (PKPQ…SQNT) and 133-149 (SRPS…QSPH).

The protein belongs to the UPF0328 family.

The sequence is that of UPF0328 protein ECU02_1590/ECU04_0060/ECU08_2120 from Encephalitozoon cuniculi (strain GB-M1) (Microsporidian parasite).